We begin with the raw amino-acid sequence, 656 residues long: Membrane-associated tyrosine- and threonine-specific cdc2-inhibitory kinase wee-1.3 (656 aa).

Positions 1 to 11 (MDETENNTSID) are enriched in polar residues. Residues 1–24 (MDETENNTSIDSVEVGPSSPRVVA) are disordered. Positions 107-354 (FQIDEIIGRG…SDALRKHLSI (248 aa)) constitute a Protein kinase domain. ATP contacts are provided by residues 113-121 (IGRGSFGEV) and lysine 136. Aspartate 227 (proton acceptor) is an active-site residue. Asparagine 232 and aspartate 245 together coordinate Mg(2+). 2 disordered regions span residues 449-552 (PFDF…NSSI) and 617-656 (KGKE…GDEN). Polar residues predominate over residues 486-505 (ATCSSSNSSAIETAEDSLSS). The span at 617 to 631 (KGKEKPVVEPAELRQ) shows a compositional bias: basic and acidic residues. The span at 646 to 656 (ASFQGSSGDEN) shows a compositional bias: polar residues.

It belongs to the protein kinase superfamily. Ser/Thr protein kinase family. WEE1 subfamily.

The protein resides in the golgi apparatus membrane. Its subcellular location is the cytoplasm. It catalyses the reaction L-seryl-[protein] + ATP = O-phospho-L-seryl-[protein] + ADP + H(+). It carries out the reaction L-threonyl-[protein] + ATP = O-phospho-L-threonyl-[protein] + ADP + H(+). Its function is as follows. Acts as a negative regulator of entry into mitosis (G2 to M transition) by phosphorylation of the CDK1 kinase during oocyte maturation. Required for embryonic development, germline proliferation and initiation of meiosis during spermatogenesis. Required for chromosome structure during mitosis and negative regulation of nuclear envelope breakdown. The chain is Membrane-associated tyrosine- and threonine-specific cdc2-inhibitory kinase wee-1.3 from Caenorhabditis briggsae.